Here is a 118-residue protein sequence, read N- to C-terminus: Ribulose bisphosphate carboxylase small subunit (118 aa).

This sequence belongs to the RuBisCO small chain family. As to quaternary structure, heterohexadecamer of 8 large and 8 small subunits.

The protein localises to the carboxysome. RuBisCO catalyzes two reactions: the carboxylation of D-ribulose 1,5-bisphosphate, the primary event in carbon dioxide fixation, as well as the oxidative fragmentation of the pentose substrate in the photorespiration process. Both reactions occur simultaneously and in competition at the same active site. Although the small subunit is not catalytic it is essential for maximal activity. This Thermosynechococcus vestitus (strain NIES-2133 / IAM M-273 / BP-1) protein is Ribulose bisphosphate carboxylase small subunit.